We begin with the raw amino-acid sequence, 819 residues long: Zinc finger protein 27 (819 aa).

One can recognise a KRAB domain in the interval 1–75 (MDVTIDFSRE…KTLGAESCHD (75 aa)). The tract at residues 93-123 (PKRPRHWDPPEDEPKHSSDLQTHDESNGLKR) is disordered. The segment covering 98-120 (HWDPPEDEPKHSSDLQTHDESNG) has biased composition (basic and acidic residues). 21 consecutive C2H2-type zinc fingers follow at residues 205 to 227 (YVCV…QKTH), 233 to 255 (YKCG…RRIH), 261 to 283 (YDCS…QKIH), 289 to 311 (HGCV…QKIH), 317 to 339 (YVCI…RRIH), 345 to 367 (YACD…QRIH), 401 to 423 (SICA…QRTH), 429 to 451 (YQCG…RRIH), 457 to 479 (YVCV…QVIH), 485 to 507 (YQCG…KRIH), 513 to 535 (YVCS…QKTH), 541 to 563 (YVCA…QRIH), 569 to 591 (YGCS…EKIH), 597 to 619 (YGCR…QKIH), 625 to 647 (HVCA…QRIH), 653 to 675 (YGCT…RPIH), 681 to 703 (YVCA…QKTH), 709 to 731 (YACS…HRIH), 737 to 759 (YDCG…QRIH), 765 to 787 (YRCA…QTTH), and 793 to 815 (YKCV…ENVH).

The protein belongs to the krueppel C2H2-type zinc-finger protein family.

The protein resides in the nucleus. Its function is as follows. May be involved in transcriptional regulation. This is Zinc finger protein 27 (Zfp27) from Mus musculus (Mouse).